Consider the following 187-residue polypeptide: Protein Flattop (187 aa).

The interval 97-187 (THSGHGIHTH…TPQLEREEPQ (91 aa)) is disordered. Over residues 122 to 131 (EGDQTCNAPT) the composition is skewed to polar residues. A compositionally biased stretch (basic and acidic residues) spans 169–187 (KRREQSLEETPQLEREEPQ).

It belongs to the Flattop family.

It is found in the cytoplasm. The protein resides in the cytoskeleton. It localises to the cilium basal body. Its subcellular location is the cell projection. The protein localises to the cilium. It is found in the apical cell membrane. The protein resides in the cilium axoneme. In terms of biological role, microtubule inner protein (MIP) part of the dynein-decorated doublet microtubules (DMTs) in cilia axoneme. Acts as a regulator of cilium basal body docking and positioning in mono- and multiciliated cells. Regulates basal body docking and cilia formation in multiciliated lung cells. Regulates kinocilium positioning and stereocilia bundle morphogenesis in the inner ear. The protein is Protein Flattop of Salmo salar (Atlantic salmon).